Reading from the N-terminus, the 263-residue chain is 4-hydroxy-tetrahydrodipicolinate reductase (263 aa).

NAD(+) contacts are provided by residues Gly-7–Met-12, Gly-96–Thr-98, and Ala-122–Phe-125. The active-site Proton donor/acceptor is His-152. Position 153 (His-153) interacts with (S)-2,3,4,5-tetrahydrodipicolinate. Residue Lys-156 is the Proton donor of the active site. Gly-162–Thr-163 contributes to the (S)-2,3,4,5-tetrahydrodipicolinate binding site.

It belongs to the DapB family.

Its subcellular location is the cytoplasm. The catalysed reaction is (S)-2,3,4,5-tetrahydrodipicolinate + NAD(+) + H2O = (2S,4S)-4-hydroxy-2,3,4,5-tetrahydrodipicolinate + NADH + H(+). It carries out the reaction (S)-2,3,4,5-tetrahydrodipicolinate + NADP(+) + H2O = (2S,4S)-4-hydroxy-2,3,4,5-tetrahydrodipicolinate + NADPH + H(+). It participates in amino-acid biosynthesis; L-lysine biosynthesis via DAP pathway; (S)-tetrahydrodipicolinate from L-aspartate: step 4/4. In terms of biological role, catalyzes the conversion of 4-hydroxy-tetrahydrodipicolinate (HTPA) to tetrahydrodipicolinate. This chain is 4-hydroxy-tetrahydrodipicolinate reductase, found in Listeria monocytogenes serotype 4b (strain F2365).